The chain runs to 447 residues: Na(+)/H(+) antiporter NhaA 2 (447 aa).

Transmembrane regions (helical) follow at residues 30–50, 81–101, 117–137, 146–166, 175–195, 199–219, 220–240, 315–335, 350–370, 383–403, and 415–435; these read FIHI…LAVL, LHKW…ALEL, LLSI…YLLL, GWGT…ALLG, IFML…VAIG, AVDW…RAMA, FLGV…WLVI, LLHP…NAGV, VFVG…WIAV, WGMV…ALFI, and AAKL…FLCL.

It belongs to the NhaA Na(+)/H(+) (TC 2.A.33) antiporter family.

It localises to the cell inner membrane. The catalysed reaction is Na(+)(in) + 2 H(+)(out) = Na(+)(out) + 2 H(+)(in). Na(+)/H(+) antiporter that extrudes sodium in exchange for external protons. The sequence is that of Na(+)/H(+) antiporter NhaA 2 from Vibrio vulnificus (strain CMCP6).